The chain runs to 112 residues: Protein lin-52 homolog (112 aa).

It belongs to the lin-52 family. Component of the DREAM complex. Expressed in the brain, liver and retina. Highly expressed in the retinal ganglion cell and inner nuclear layers at the parr stage. Expressed at a lower level in inner segments of some retinal photoreceptors.

May be involved in retinal development. The protein is Protein lin-52 homolog (lin52) of Oncorhynchus mykiss (Rainbow trout).